The sequence spans 252 residues: Phosphoribosylaminoimidazole-succinocarboxamide synthase 1 (252 aa).

This sequence belongs to the SAICAR synthetase family.

It catalyses the reaction 5-amino-1-(5-phospho-D-ribosyl)imidazole-4-carboxylate + L-aspartate + ATP = (2S)-2-[5-amino-1-(5-phospho-beta-D-ribosyl)imidazole-4-carboxamido]succinate + ADP + phosphate + 2 H(+). It participates in purine metabolism; IMP biosynthesis via de novo pathway; 5-amino-1-(5-phospho-D-ribosyl)imidazole-4-carboxamide from 5-amino-1-(5-phospho-D-ribosyl)imidazole-4-carboxylate: step 1/2. In Caulobacter vibrioides (strain ATCC 19089 / CIP 103742 / CB 15) (Caulobacter crescentus), this protein is Phosphoribosylaminoimidazole-succinocarboxamide synthase 1 (purC1).